Here is a 178-residue protein sequence, read N- to C-terminus: Acireductone dioxygenase 1 (178 aa).

Positions 84, 86, 90, and 130 each coordinate Fe(2+). Ni(2+) contacts are provided by histidine 84, histidine 86, glutamate 90, and histidine 130.

Belongs to the acireductone dioxygenase (ARD) family. It depends on Fe(2+) as a cofactor. Ni(2+) is required as a cofactor.

It localises to the cytoplasm. The protein localises to the nucleus. It catalyses the reaction 1,2-dihydroxy-5-(methylsulfanyl)pent-1-en-3-one + O2 = 4-methylsulfanyl-2-oxobutanoate + formate + 2 H(+). The catalysed reaction is 1,2-dihydroxy-5-(methylsulfanyl)pent-1-en-3-one + O2 = 3-(methylsulfanyl)propanoate + CO + formate + 2 H(+). The protein operates within amino-acid biosynthesis; L-methionine biosynthesis via salvage pathway; L-methionine from S-methyl-5-thio-alpha-D-ribose 1-phosphate: step 5/6. Catalyzes 2 different reactions between oxygen and the acireductone 1,2-dihydroxy-3-keto-5-methylthiopentene (DHK-MTPene) depending upon the metal bound in the active site. Fe-containing acireductone dioxygenase (Fe-ARD) produces formate and 2-keto-4-methylthiobutyrate (KMTB), the alpha-ketoacid precursor of methionine in the methionine recycle pathway. Ni-containing acireductone dioxygenase (Ni-ARD) produces methylthiopropionate, carbon monoxide and formate, and does not lie on the methionine recycle pathway. The sequence is that of Acireductone dioxygenase 1 from Coprinopsis cinerea (strain Okayama-7 / 130 / ATCC MYA-4618 / FGSC 9003) (Inky cap fungus).